Reading from the N-terminus, the 140-residue chain is FLYWCH family member 2 (140 aa).

Disordered stretches follow at residues 1–39 (MPLP…PREF) and 83–140 (THPE…GKSL). Ser-21 is subject to Phosphoserine. A compositionally biased stretch (basic and acidic residues) spans 98 to 114 (PEQKRSRQDPGADRTED). Low complexity predominate over residues 118 to 127 (AAGPPEAAGE).

The sequence is that of FLYWCH family member 2 (FLYWCH2) from Pongo abelii (Sumatran orangutan).